Here is a 181-residue protein sequence, read N- to C-terminus: MTPELAHDLKASVRSIPDYPKPGIVFRDITTLLGDPRAFRRAVDELVQPWAGSKVDKVAGIEARGFIIGGAVAHQVSSGFVPIRKKGKLPHTCVSMEYALEYGTDHIEIHVDAVKPGERVILVDDLIATGGTAEGAIKLLRQLGAEVVAACFIVDLPDLGGAAKIRAMGVPVRTLIEFGGH.

It belongs to the purine/pyrimidine phosphoribosyltransferase family. In terms of assembly, homodimer.

It localises to the cytoplasm. The enzyme catalyses AMP + diphosphate = 5-phospho-alpha-D-ribose 1-diphosphate + adenine. It functions in the pathway purine metabolism; AMP biosynthesis via salvage pathway; AMP from adenine: step 1/1. Functionally, catalyzes a salvage reaction resulting in the formation of AMP, that is energically less costly than de novo synthesis. This Rhodopseudomonas palustris (strain BisB5) protein is Adenine phosphoribosyltransferase.